The chain runs to 588 residues: Aspartate--tRNA ligase (588 aa).

Glu174 serves as a coordination point for L-aspartate. The aspartate stretch occupies residues 198-201 (QLFK). Arg220 lines the L-aspartate pocket. Residues 220 to 222 (RDE) and Gln229 contribute to the ATP site. An L-aspartate-binding site is contributed by His448. Residue Glu482 coordinates ATP. Arg489 serves as a coordination point for L-aspartate. 534–537 (GIDR) serves as a coordination point for ATP.

This sequence belongs to the class-II aminoacyl-tRNA synthetase family. Type 1 subfamily. Homodimer.

The protein localises to the cytoplasm. The catalysed reaction is tRNA(Asp) + L-aspartate + ATP = L-aspartyl-tRNA(Asp) + AMP + diphosphate. Its function is as follows. Catalyzes the attachment of L-aspartate to tRNA(Asp) in a two-step reaction: L-aspartate is first activated by ATP to form Asp-AMP and then transferred to the acceptor end of tRNA(Asp). In Xanthomonas campestris pv. campestris (strain B100), this protein is Aspartate--tRNA ligase.